The primary structure comprises 112 residues: uncharacterized protein (112 aa).

Coiled coils occupy residues Ala-15–Phe-53 and Leu-86–Lys-103.

This is an uncharacterized protein from Aquifex aeolicus (strain VF5).